The primary structure comprises 700 residues: Elongation factor G 1 (700 aa).

In terms of domain architecture, tr-type G spans 8–290 (ERYRNIGISA…AVIEYLPSPI (283 aa)). GTP-binding positions include 17-24 (AHIDAGKT), 88-92 (DTPGH), and 142-145 (NKMD).

This sequence belongs to the TRAFAC class translation factor GTPase superfamily. Classic translation factor GTPase family. EF-G/EF-2 subfamily.

It is found in the cytoplasm. Functionally, catalyzes the GTP-dependent ribosomal translocation step during translation elongation. During this step, the ribosome changes from the pre-translocational (PRE) to the post-translocational (POST) state as the newly formed A-site-bound peptidyl-tRNA and P-site-bound deacylated tRNA move to the P and E sites, respectively. Catalyzes the coordinated movement of the two tRNA molecules, the mRNA and conformational changes in the ribosome. The chain is Elongation factor G 1 from Bordetella avium (strain 197N).